The chain runs to 335 residues: Thioredoxin-related transmembrane protein 4 (335 aa).

An N-terminal signal peptide occupies residues 1 to 20; that stretch reads MTGGFCVPVLLAAWLAAAAA. The Thioredoxin domain maps to 26-133; sequence AALPAEESRV…YEDLQNYILE (108 aa). Residues Cys-60 and Cys-63 each act as nucleophile in the active site. The cysteines at positions 60 and 63 are disulfide-linked. Residues 186–206 traverse the membrane as a helical segment; sequence VFFVIATLVFGLFMGLILVVI. The interval 222 to 316 is disordered; that stretch reads CEQEQSTGEA…EDGAHPADTQ (95 aa). Over residues 238 to 280 the composition is skewed to acidic residues; sequence QDAEEEKDDSNEEENKDSLVDDEEEKEDIGDEDEGEEDEEEDN. Residues Ser-247 and Ser-255 each carry the phosphoserine modification. A compositionally biased stretch (basic and acidic residues) spans 286–298; the sequence is AEERSDTNERAVV.

It is found in the nucleus inner membrane. The protein resides in the endoplasmic reticulum membrane. This chain is Thioredoxin-related transmembrane protein 4 (Tmx4), found in Mus musculus (Mouse).